A 139-amino-acid polypeptide reads, in one-letter code: Small ribosomal subunit protein eS6 (139 aa).

This sequence belongs to the eukaryotic ribosomal protein eS6 family.

The sequence is that of Small ribosomal subunit protein eS6 from Methanosarcina barkeri (strain Fusaro / DSM 804).